We begin with the raw amino-acid sequence, 132 residues long: Ubiquinol-cytochrome c reductase complex assembly factor 4 (132 aa).

A signal peptide spans 1-15 (MNRVLCAPAAGAVRA). The Mitochondrial matrix segment spans residues 16-78 (LRLIGRTSRS…GKGHQRPWWK (63 aa)). The interval 24 to 73 (RSLHPLPGSRDRAHPAAEEQDDPDRPTEFSSSKANPRRWSVGHSMGKGHQ) is disordered. Over residues 32–50 (SRDRAHPAAEEQDDPDRPT) the composition is skewed to basic and acidic residues. The chain crosses the membrane as a helical span at residues 79–95 (VLPLSCFLVALIIWCYL). Residues 96–132 (REESEADQWLRQVWGEVPEPSDRSEEPETPAAYRART) lie on the Mitochondrial intermembrane side of the membrane. Residues 110-132 (GEVPEPSDRSEEPETPAAYRART) form a disordered region.

It belongs to the UQCC4 family. In terms of assembly, forms a complex, named COMB/coordinator of mitochondrial CYTB biogenesis, composed of UQCC1, UQCC2, UQCC4, UQCC5 and UQCC6; stabilizes nascent cytochrome b/MT-CYB and promotes its membrane insertion. Forms a complex, named COMA, composed of UQCC1, UQCC2 and UQCC4; activates MT-CYB translation. Forms a complex, named COMC, composed of UQCC1, UQCC2; UQCC3 and UQCC4; mediates MT-CYB hemylation and association with the first nuclear-encoded complex III subunit UQCRQ. Complexes COMA and COMB are bound to the mitochondrion inner membrane by UQCC4.

The protein localises to the mitochondrion inner membrane. Its function is as follows. Required for the assembly and stability of the mitochondrial ubiquinol-cytochrome c reductase complex (complex III (CIII) or cytochrome b-c1 complex), a multisubunit transmembrane complex that is part of the mitochondrial electron transport chain (ETC) which drives oxidative phosphorylation. This chain is Ubiquinol-cytochrome c reductase complex assembly factor 4 (UQCC4), found in Pongo abelii (Sumatran orangutan).